Consider the following 391-residue polypeptide: MYKAFLIKYAEIGLKGKNRHIFENALKDQIRFNLNKLGNFEVSREQGRVFVECPDDFDYDETVAALQRVFGITGISPVIVINSTDWEDIKQEVGDYVEKFYGRKPFTFKVEAKRGNKQYPIQSPEICSKMGAYLLDRFPELSVDVHTPQEYITVEVRNKAYVYSNTLKGPGGMPVGTGGKAMLLLSGGIDSPVAGYMISKRGVTIEATYFHAPPYTSERAKQKVVDLAKIISAYTGPIKLHVVNFTDIQLYIYEKCPHEELTIIMRRYMMKIAESIANRSKCLGLITGESIGQVASQTMQSLAATNAVCTMPVYRPLIGMDKQEIIDISERIGTFETSVLPFEDCCTIFVAKHPVTRPILSVIEKNELNLSEKIDELVKTALETREVITVK.

A THUMP domain is found at 60–167 (DETVAALQRV…NKAYVYSNTL (108 aa)). Residues 184-185 (LL), 209-210 (YF), Arg266, Gly288, and Gln297 each bind ATP.

It belongs to the ThiI family.

Its subcellular location is the cytoplasm. It carries out the reaction [ThiI sulfur-carrier protein]-S-sulfanyl-L-cysteine + a uridine in tRNA + 2 reduced [2Fe-2S]-[ferredoxin] + ATP + H(+) = [ThiI sulfur-carrier protein]-L-cysteine + a 4-thiouridine in tRNA + 2 oxidized [2Fe-2S]-[ferredoxin] + AMP + diphosphate. The enzyme catalyses [ThiS sulfur-carrier protein]-C-terminal Gly-Gly-AMP + S-sulfanyl-L-cysteinyl-[cysteine desulfurase] + AH2 = [ThiS sulfur-carrier protein]-C-terminal-Gly-aminoethanethioate + L-cysteinyl-[cysteine desulfurase] + A + AMP + 2 H(+). It functions in the pathway cofactor biosynthesis; thiamine diphosphate biosynthesis. In terms of biological role, catalyzes the ATP-dependent transfer of a sulfur to tRNA to produce 4-thiouridine in position 8 of tRNAs, which functions as a near-UV photosensor. Also catalyzes the transfer of sulfur to the sulfur carrier protein ThiS, forming ThiS-thiocarboxylate. This is a step in the synthesis of thiazole, in the thiamine biosynthesis pathway. The sulfur is donated as persulfide by IscS. This Lachnoclostridium phytofermentans (strain ATCC 700394 / DSM 18823 / ISDg) (Clostridium phytofermentans) protein is Probable tRNA sulfurtransferase.